The chain runs to 214 residues: 3-demethoxyubiquinol 3-hydroxylase (214 aa).

Glutamate 63, glutamate 93, histidine 96, glutamate 145, glutamate 177, and histidine 180 together coordinate Fe cation.

The protein belongs to the COQ7 family. Fe cation is required as a cofactor.

Its subcellular location is the cell membrane. The catalysed reaction is a 5-methoxy-2-methyl-3-(all-trans-polyprenyl)benzene-1,4-diol + AH2 + O2 = a 3-demethylubiquinol + A + H2O. It participates in cofactor biosynthesis; ubiquinone biosynthesis. Catalyzes the hydroxylation of 2-nonaprenyl-3-methyl-6-methoxy-1,4-benzoquinol during ubiquinone biosynthesis. In Psychrobacter arcticus (strain DSM 17307 / VKM B-2377 / 273-4), this protein is 3-demethoxyubiquinol 3-hydroxylase.